Reading from the N-terminus, the 460-residue chain is V-type ATP synthase beta chain (460 aa).

Belongs to the ATPase alpha/beta chains family.

Produces ATP from ADP in the presence of a proton gradient across the membrane. The V-type beta chain is a regulatory subunit. The polypeptide is V-type ATP synthase beta chain (Anaeromyxobacter sp. (strain Fw109-5)).